A 249-amino-acid chain; its full sequence is Benzil reductase ((S)-benzoin forming) (249 aa).

NADP(+) contacts are provided by Ile-6, Asn-87, Tyr-154, Lys-158, Val-189, and Thr-191. Residue Tyr-154 is the Proton acceptor of the active site.

The protein belongs to the short-chain dehydrogenases/reductases (SDR) family.

Its subcellular location is the cytoplasm. It carries out the reaction (S)-benzoin + NADP(+) = benzil + NADPH + H(+). It catalyses the reaction 2-hydroxy-1-phenyl-1-propanone + NADP(+) = 1-phenyl-1,2-propanedione + NADPH + H(+). With respect to regulation, inhibited by Cibacron blue 3GA, a general SDR family inhibitor. In terms of biological role, reduces benzil stereospecifically to (S)-benzoin. Can also reduce 1-phenyl-1,2-propanedione, 1,4-naphthoquinone, 1-(4-methyl-phenyl)-2-phenyl-ethane-1,2-dione, 1-(4-fluoro-phenyl)-2-phenyl-ethane-1,2-dione, methyl benzoylformate and p-nitrobenzaldehyde in decreasing order. The sequence is that of Benzil reductase ((S)-benzoin forming) from Bacillus cereus.